The sequence spans 209 residues: Large ribosomal subunit protein uL3 (209 aa).

It belongs to the universal ribosomal protein uL3 family. As to quaternary structure, part of the 50S ribosomal subunit. Forms a cluster with proteins L14 and L19.

Its function is as follows. One of the primary rRNA binding proteins, it binds directly near the 3'-end of the 23S rRNA, where it nucleates assembly of the 50S subunit. In Clostridium tetani (strain Massachusetts / E88), this protein is Large ribosomal subunit protein uL3.